A 510-amino-acid polypeptide reads, in one-letter code: NAD(P)H-quinone oxidoreductase subunit 2 B, chloroplastic (510 aa).

A run of 13 helical transmembrane segments spans residues 24–44 (LLLF…GLIL), 57–77 (IPWL…ALLF), 99–119 (IFQF…VEYI), 124–144 (MAIT…MFLC), 149–169 (LITI…LSGY), 183–203 (YLLM…WLYG), 227–247 (PGIS…LSLA), 295–315 (WHLL…LIAI), 323–343 (MLAY…IVGD), 354–374 (YMLF…LFGL), 395–415 (ALSL…AGFF), 418–438 (LHLF…IGLL), and 484–504 (MIVC…IIAI).

It belongs to the complex I subunit 2 family. As to quaternary structure, NDH is composed of at least 16 different subunits, 5 of which are encoded in the nucleus.

Its subcellular location is the plastid. It localises to the chloroplast thylakoid membrane. The catalysed reaction is a plastoquinone + NADH + (n+1) H(+)(in) = a plastoquinol + NAD(+) + n H(+)(out). The enzyme catalyses a plastoquinone + NADPH + (n+1) H(+)(in) = a plastoquinol + NADP(+) + n H(+)(out). Functionally, NDH shuttles electrons from NAD(P)H:plastoquinone, via FMN and iron-sulfur (Fe-S) centers, to quinones in the photosynthetic chain and possibly in a chloroplast respiratory chain. The immediate electron acceptor for the enzyme in this species is believed to be plastoquinone. Couples the redox reaction to proton translocation, and thus conserves the redox energy in a proton gradient. This Citrus sinensis (Sweet orange) protein is NAD(P)H-quinone oxidoreductase subunit 2 B, chloroplastic.